Here is a 420-residue protein sequence, read N- to C-terminus: Serine hydroxymethyltransferase (420 aa).

Residues Leu-121 and 125–127 each bind (6S)-5,6,7,8-tetrahydrofolate; that span reads GHL. The residue at position 229 (Lys-229) is an N6-(pyridoxal phosphate)lysine.

It belongs to the SHMT family. As to quaternary structure, homodimer. It depends on pyridoxal 5'-phosphate as a cofactor.

It is found in the cytoplasm. It carries out the reaction (6R)-5,10-methylene-5,6,7,8-tetrahydrofolate + glycine + H2O = (6S)-5,6,7,8-tetrahydrofolate + L-serine. It functions in the pathway one-carbon metabolism; tetrahydrofolate interconversion. Its pathway is amino-acid biosynthesis; glycine biosynthesis; glycine from L-serine: step 1/1. Catalyzes the reversible interconversion of serine and glycine with tetrahydrofolate (THF) serving as the one-carbon carrier. This reaction serves as the major source of one-carbon groups required for the biosynthesis of purines, thymidylate, methionine, and other important biomolecules. Also exhibits THF-independent aldolase activity toward beta-hydroxyamino acids, producing glycine and aldehydes, via a retro-aldol mechanism. This Pasteurella multocida (strain Pm70) protein is Serine hydroxymethyltransferase.